We begin with the raw amino-acid sequence, 194 residues long: Peptide deformylase (194 aa).

A disordered region spans residues 71–93; it reads DAEPEECGHDHGDGEGAHKHYPV. Positions 76–93 are enriched in basic and acidic residues; it reads ECGHDHGDGEGAHKHYPV. Residues cysteine 119 and histidine 161 each contribute to the Fe cation site. Residue glutamate 162 is part of the active site. Histidine 165 contacts Fe cation.

The protein belongs to the polypeptide deformylase family. Fe(2+) is required as a cofactor.

It catalyses the reaction N-terminal N-formyl-L-methionyl-[peptide] + H2O = N-terminal L-methionyl-[peptide] + formate. Its function is as follows. Removes the formyl group from the N-terminal Met of newly synthesized proteins. Requires at least a dipeptide for an efficient rate of reaction. N-terminal L-methionine is a prerequisite for activity but the enzyme has broad specificity at other positions. The chain is Peptide deformylase from Erythrobacter litoralis (strain HTCC2594).